The following is a 178-amino-acid chain: Translation initiation factor IF-3 (178 aa).

It belongs to the IF-3 family. In terms of assembly, monomer.

The protein localises to the cytoplasm. Its function is as follows. IF-3 binds to the 30S ribosomal subunit and shifts the equilibrium between 70S ribosomes and their 50S and 30S subunits in favor of the free subunits, thus enhancing the availability of 30S subunits on which protein synthesis initiation begins. This chain is Translation initiation factor IF-3, found in Nautilia profundicola (strain ATCC BAA-1463 / DSM 18972 / AmH).